The chain runs to 211 residues: Probable GTP-binding protein EngB (211 aa).

The EngB-type G domain maps to 21 to 205 (LMATIVFVGR…KNRIYEIIRE (185 aa)). GTP-binding positions include 29 to 36 (GRSNVGKS), 54 to 58 (GVTRK), 71 to 74 (DMPG), 151 to 154 (NKLD), and 184 to 186 (ISA). Mg(2+) is bound by residues Ser36 and Thr56.

Belongs to the TRAFAC class TrmE-Era-EngA-EngB-Septin-like GTPase superfamily. EngB GTPase family. Mg(2+) is required as a cofactor.

In terms of biological role, necessary for normal cell division and for the maintenance of normal septation. In Pyrococcus abyssi (strain GE5 / Orsay), this protein is Probable GTP-binding protein EngB.